Consider the following 325-residue polypeptide: Cytosolic Fe-S cluster assembly factor Nubp1 homolog (325 aa).

Residues 1-26 (MSSGADVPSDAPAHCPGTQSDDAGKA) are disordered. Positions 15, 29, 32, and 38 each coordinate [4Fe-4S] cluster. ATP is bound at residue 68–75 (GKGGVGKS). 2 residues coordinate [4Fe-4S] cluster: Cys243 and Cys246.

It belongs to the Mrp/NBP35 ATP-binding proteins family. NUBP1/NBP35 subfamily. In terms of assembly, heterotetramer of 2 Nubp1 and 2 Nubp2 chains. [4Fe-4S] cluster serves as cofactor.

The protein localises to the cytoplasm. Component of the cytosolic iron-sulfur (Fe/S) protein assembly (CIA) machinery. Required for maturation of extramitochondrial Fe-S proteins. The Nubp1-Nubp2 heterotetramer forms a Fe-S scaffold complex, mediating the de novo assembly of an Fe-S cluster and its transfer to target apoproteins. The sequence is that of Cytosolic Fe-S cluster assembly factor Nubp1 homolog from Anopheles gambiae (African malaria mosquito).